A 122-amino-acid polypeptide reads, in one-letter code: Large ribosomal subunit protein uL14 (122 aa).

This sequence belongs to the universal ribosomal protein uL14 family. Part of the 50S ribosomal subunit. Forms a cluster with proteins L3 and L19. In the 70S ribosome, L14 and L19 interact and together make contacts with the 16S rRNA in bridges B5 and B8.

Its function is as follows. Binds to 23S rRNA. Forms part of two intersubunit bridges in the 70S ribosome. The chain is Large ribosomal subunit protein uL14 from Borreliella afzelii (strain PKo) (Borrelia afzelii).